The following is a 467-amino-acid chain: Polygalacturonase (467 aa).

Residues 1-27 (MALQRRFFQFVIITLLIPSFILGYTSA) form the signal peptide. The active-site Proton donor is the D283. An N-linked (GlcNAc...) asparagine glycan is attached at N290. The active site involves H306.

It belongs to the glycosyl hydrolase 28 family.

The protein resides in the secreted. The protein localises to the cell wall. It catalyses the reaction (1,4-alpha-D-galacturonosyl)n+m + H2O = (1,4-alpha-D-galacturonosyl)n + (1,4-alpha-D-galacturonosyl)m.. Acts in concert with the pectinesterase, in the ripening process. Is involved in cell wall metabolism, specifically in polyuronide degradation. This chain is Polygalacturonase, found in Actinidia deliciosa (Kiwi).